Reading from the N-terminus, the 300-residue chain is Acetylglutamate kinase (300 aa).

Substrate-binding positions include 69 to 70 (GG), Arg91, and Asn197.

This sequence belongs to the acetylglutamate kinase family. ArgB subfamily.

It localises to the cytoplasm. It carries out the reaction N-acetyl-L-glutamate + ATP = N-acetyl-L-glutamyl 5-phosphate + ADP. The protein operates within amino-acid biosynthesis; L-arginine biosynthesis; N(2)-acetyl-L-ornithine from L-glutamate: step 2/4. Its function is as follows. Catalyzes the ATP-dependent phosphorylation of N-acetyl-L-glutamate. This chain is Acetylglutamate kinase, found in Kineococcus radiotolerans (strain ATCC BAA-149 / DSM 14245 / SRS30216).